The primary structure comprises 1956 residues: Probable cation-transporting ATPase 1 (1956 aa).

Residues 1–35 (MHLMCTGLRNEKLINDRKILYGECNLNIKSDSFII) lie on the Cytoplasmic side of the membrane. A helical membrane pass occupies residues 36–58 (LLFKEIMNPFFIFQIFAMIVWSL). Topologically, residues 59 to 61 (DNY) are extracellular. The chain crosses the membrane as a helical span at residues 62–80 (IEYTISILFITSISIILEL). Residues 81 to 407 (KNTIKNQKKI…KKELNLINDS (327 aa)) are Cytoplasmic-facing. The chain crosses the membrane as a helical span at residues 408–427 (YKFLIILIIYALFSVFILLY). Over 428–440 (ITLSNNEYTNHII) the chain is Extracellular. Residues 441–462 (IKCLDIITDAIPPALPTTLTVG) traverse the membrane as a helical segment. Residues 463-1818 (ISIAISRLKK…SLVNSFQLFK (1356 aa)) lie on the Cytoplasmic side of the membrane. Asp496 functions as the 4-aspartylphosphate intermediate in the catalytic mechanism. Residues 901–938 (YGNNNDDNNDDDNNNDDDNNDDNNNDDNNNDDNNDDNN) are disordered. Residues 907 to 935 (DNNDDDNNNDDDNNDDNNNDDNNNDDNND) are compositionally biased toward acidic residues. 2 residues coordinate Mg(2+): Asp1760 and Asp1764. A helical membrane pass occupies residues 1819–1837 (FISLYSIMQCSQVLILYSI). The Extracellular segment spans residues 1838–1845 (SNKLTDNQ). The chain crosses the membrane as a helical span at residues 1846 to 1863 (YIFIDIVTILPLSIFMCW). At 1864–1881 (TSASEKLSKNIPIGKLFS) the chain is on the cytoplasmic side. Residues 1882 to 1905 (FPILISIYGQIIIQLFFVMISLVV) traverse the membrane as a helical segment. Residues 1906–1928 (LMNLSFYKYDKNKVMKEKSDDTY) are Extracellular-facing. The chain crosses the membrane as a helical span at residues 1929 to 1952 (LYKAQKYTLIYSLLFSKFVYVYIF). The Cytoplasmic segment spans residues 1953 to 1956 (KYKE).

The protein belongs to the cation transport ATPase (P-type) (TC 3.A.3) family. Type V subfamily.

The protein resides in the membrane. The catalysed reaction is ATP + H2O = ADP + phosphate + H(+). This Plasmodium falciparum protein is Probable cation-transporting ATPase 1.